Here is a 218-residue protein sequence, read N- to C-terminus: Probable transaldolase (218 aa).

Residue Lys87 is the Schiff-base intermediate with substrate of the active site.

Belongs to the transaldolase family. Type 3B subfamily.

The protein localises to the cytoplasm. It carries out the reaction D-sedoheptulose 7-phosphate + D-glyceraldehyde 3-phosphate = D-erythrose 4-phosphate + beta-D-fructose 6-phosphate. Its pathway is carbohydrate degradation; pentose phosphate pathway; D-glyceraldehyde 3-phosphate and beta-D-fructose 6-phosphate from D-ribose 5-phosphate and D-xylulose 5-phosphate (non-oxidative stage): step 2/3. In terms of biological role, transaldolase is important for the balance of metabolites in the pentose-phosphate pathway. The chain is Probable transaldolase from Parabacteroides distasonis (strain ATCC 8503 / DSM 20701 / CIP 104284 / JCM 5825 / NCTC 11152).